A 250-amino-acid polypeptide reads, in one-letter code: DNA repair protein RecO (250 aa).

It belongs to the RecO family.

Its function is as follows. Involved in DNA repair and RecF pathway recombination. The protein is DNA repair protein RecO of Rhodopseudomonas palustris (strain TIE-1).